Here is a 239-residue protein sequence, read N- to C-terminus: Orotidine 5'-phosphate decarboxylase (239 aa).

Substrate-binding positions include Asp11, Lys33, 60-69 (DLKFHDIPTT), Thr117, Arg178, Gln187, Gly207, and Arg208. Residue Lys62 is the Proton donor of the active site.

Belongs to the OMP decarboxylase family. Type 1 subfamily. In terms of assembly, homodimer.

The enzyme catalyses orotidine 5'-phosphate + H(+) = UMP + CO2. It functions in the pathway pyrimidine metabolism; UMP biosynthesis via de novo pathway; UMP from orotate: step 2/2. In terms of biological role, catalyzes the decarboxylation of orotidine 5'-monophosphate (OMP) to uridine 5'-monophosphate (UMP). This is Orotidine 5'-phosphate decarboxylase from Nitrosospira multiformis (strain ATCC 25196 / NCIMB 11849 / C 71).